Consider the following 360-residue polypeptide: Phosphoserine aminotransferase (360 aa).

An L-glutamate-binding site is contributed by Arg41. 4 residues coordinate pyridoxal 5'-phosphate: Trp101, Thr152, Asp172, and Gln195. Residue Lys196 is modified to N6-(pyridoxal phosphate)lysine. Position 237 to 238 (237 to 238) interacts with pyridoxal 5'-phosphate; sequence NT.

This sequence belongs to the class-V pyridoxal-phosphate-dependent aminotransferase family. SerC subfamily. In terms of assembly, homodimer. The cofactor is pyridoxal 5'-phosphate.

The protein resides in the cytoplasm. It catalyses the reaction O-phospho-L-serine + 2-oxoglutarate = 3-phosphooxypyruvate + L-glutamate. It carries out the reaction 4-(phosphooxy)-L-threonine + 2-oxoglutarate = (R)-3-hydroxy-2-oxo-4-phosphooxybutanoate + L-glutamate. The protein operates within amino-acid biosynthesis; L-serine biosynthesis; L-serine from 3-phospho-D-glycerate: step 2/3. Its pathway is cofactor biosynthesis; pyridoxine 5'-phosphate biosynthesis; pyridoxine 5'-phosphate from D-erythrose 4-phosphate: step 3/5. In terms of biological role, catalyzes the reversible conversion of 3-phosphohydroxypyruvate to phosphoserine and of 3-hydroxy-2-oxo-4-phosphonooxybutanoate to phosphohydroxythreonine. The polypeptide is Phosphoserine aminotransferase (Burkholderia orbicola (strain MC0-3)).